A 282-amino-acid polypeptide reads, in one-letter code: Ribosomal protein L11 methyltransferase (282 aa).

Positions 133, 154, 175, and 216 each coordinate S-adenosyl-L-methionine.

The protein belongs to the methyltransferase superfamily. PrmA family.

It is found in the cytoplasm. It catalyses the reaction L-lysyl-[protein] + 3 S-adenosyl-L-methionine = N(6),N(6),N(6)-trimethyl-L-lysyl-[protein] + 3 S-adenosyl-L-homocysteine + 3 H(+). Functionally, methylates ribosomal protein L11. The sequence is that of Ribosomal protein L11 methyltransferase from Campylobacter jejuni subsp. doylei (strain ATCC BAA-1458 / RM4099 / 269.97).